We begin with the raw amino-acid sequence, 415 residues long: Probable RAD2-like endonuclease 369L (415 aa).

Positions 1–114 (MGIKNLTKFI…EDVKKKTLSL (114 aa)) are N-domain. Mg(2+)-binding residues include aspartate 34, glutamate 86, glutamate 198, glutamate 200, aspartate 219, aspartate 221, and aspartate 277. The interval 163-297 (VKQRHRYDIR…VKSYELIKVQ (135 aa)) is I-domain.

This sequence belongs to the XPG/RAD2 endonuclease family. It depends on Mg(2+) as a cofactor.

It is found in the host nucleus. Its function is as follows. Probable endonuclease. In Acheta domesticus (House cricket), this protein is Probable RAD2-like endonuclease 369L.